The primary structure comprises 623 residues: Chaperone protein DnaK (623 aa).

The residue at position 175 (threonine 175) is a Phosphothreonine; by autocatalysis. The disordered stretch occupies residues 578–623 (ANPEGAPGAGFDPNNMGGANAGNASAGNDKKDDNVVDADFKVEDDK). Over residues 591-604 (NNMGGANAGNASAG) the composition is skewed to low complexity. Residues 605-623 (NDKKDDNVVDADFKVEDDK) are compositionally biased toward basic and acidic residues.

This sequence belongs to the heat shock protein 70 family.

Acts as a chaperone. This Clostridium botulinum (strain 657 / Type Ba4) protein is Chaperone protein DnaK.